We begin with the raw amino-acid sequence, 80 residues long: MMSKLGVLLTICLLLFPLFALPQDGDQPADRPAERMQDDLSSEQHPLFEKRIVDRCCNKGNGKRGCSRWCRDHSRCCGRR.

A signal peptide spans 1–22 (MMSKLGVLLTICLLLFPLFALP). A propeptide spanning residues 23-51 (QDGDQPADRPAERMQDDLSSEQHPLFEKR) is cleaved from the precursor. Disulfide bonds link Cys56-Cys70, Cys57-Cys76, and Cys66-Cys77. Cys77 is modified (cysteine amide).

The protein belongs to the conotoxin M superfamily. As to expression, expressed by the venom duct.

It localises to the secreted. Mu-conotoxins block voltage-gated sodium channels. Extremely potent inhibitor of Nav1.4/SCN4A (96% inhibition at 1 uM). The inhibition is very slowly reversible. The polypeptide is Mu-conotoxin BuIIIC (Conus bullatus (Bubble cone)).